The following is a 229-amino-acid chain: Large ribosomal subunit protein uL1 (229 aa).

This sequence belongs to the universal ribosomal protein uL1 family. As to quaternary structure, part of the 50S ribosomal subunit.

Functionally, binds directly to 23S rRNA. The L1 stalk is quite mobile in the ribosome, and is involved in E site tRNA release. Its function is as follows. Protein L1 is also a translational repressor protein, it controls the translation of the L11 operon by binding to its mRNA. In Chlorobium chlorochromatii (strain CaD3), this protein is Large ribosomal subunit protein uL1.